The chain runs to 260 residues: Indole-3-glycerol phosphate synthase (260 aa).

Belongs to the TrpC family.

It carries out the reaction 1-(2-carboxyphenylamino)-1-deoxy-D-ribulose 5-phosphate + H(+) = (1S,2R)-1-C-(indol-3-yl)glycerol 3-phosphate + CO2 + H2O. It participates in amino-acid biosynthesis; L-tryptophan biosynthesis; L-tryptophan from chorismate: step 4/5. This is Indole-3-glycerol phosphate synthase from Staphylococcus aureus (strain bovine RF122 / ET3-1).